The chain runs to 674 residues: MNDMTLYLIIALVPLAGSLIAGLFGNKIGRAGAHTVTILGVAVSAVLSAYVLWGFLNGSRAKFDENVYTWLTMGGLDFSVGFLVDTMTAMMMVVVTGVSLMVHIYTIGYMHDEKVGYQRFFSYISLFTFSMLMLIMSNNFIQLFFGWEAVGLVSYLLIGFYFKRPSATFANLKAFLINRVGDFGFLLGIGLVLAYFGGSLRYQDVFAYLPNVQNATIQLFPGVEWSLITVTCLLLFVGAMGKSAQFPLHVWLPDSMEGPTPISALIHAATMVTAGLFMVSRMSPIYEMSSTALSVIMVIGAITALFMGFLGVIQNDIKRVVAYSTLSQLGYMTVALGASAYSVAMFHVMTHAFFKALLFLAAGSAIIGMHHDQDMRHMGNLKKYMPITWLTMLIGNLSLIGTPFFSGFYSKDSIIEAAKYSTLPGSGFAYFAVLASVFVTAFYAFRQYFMVFHGEEKWRSLPEHHSDGHGEEHHGLGKNDNPHESPLVVTLPLILLAVPSVIIGYIAIEPMLYGDFFKDVIFVNADAHPTMHIMKEEFHGALAMVSHSLHSPVLYLAIAGVLSAWLLYVKLPHLPAKIAQAFRPVYVLFENKYYLDALYFNVFAKGTRALGTFFWKVGDTAIIDNGIVNGSARLVGAVAAQVRKVQTGFIYTYAAAMVFGVLVLLGMTFWGLFR.

16 consecutive transmembrane segments (helical) span residues 4-24 (MTLY…AGLF), 36-56 (VTIL…WGFL), 67-87 (VYTW…VDTM), 90-110 (MMMV…IGYM), 115-135 (VGYQ…LMLI), 140-160 (FIQL…LIGF), 180-200 (VGDF…GGSL), 219-239 (LFPG…FVGA), 259-279 (PTPI…LFMV), 293-313 (LSVI…LGVI), 348-368 (VMTH…AIIG), 385-405 (MPIT…TPFF), 425-445 (GSGF…FYAF), 488-508 (VVTL…YIAI), 549-569 (LHSP…LLYV), and 653-673 (YAAA…WGLF).

Belongs to the complex I subunit 5 family.

It localises to the cell membrane. The catalysed reaction is a quinone + NADH + 5 H(+)(in) = a quinol + NAD(+) + 4 H(+)(out). NDH-1 shuttles electrons from NADH, via FMN and iron-sulfur (Fe-S) centers, to quinones in the respiratory chain. The immediate electron acceptor for the enzyme in this species is believed to be ubiquinone. Couples the redox reaction to proton translocation (for every two electrons transferred, four hydrogen ions are translocated across the cytoplasmic membrane), and thus conserves the redox energy in a proton gradient. The protein is NADH-quinone oxidoreductase subunit L (nuoL) of Neisseria meningitidis serogroup A / serotype 4A (strain DSM 15465 / Z2491).